A 283-amino-acid polypeptide reads, in one-letter code: Shikimate kinase (283 aa).

86–96 provides a ligand contact to ATP; it reads PIKSGLSSSSA.

The protein belongs to the GHMP kinase family. Archaeal shikimate kinase subfamily.

The protein localises to the cytoplasm. It carries out the reaction shikimate + ATP = 3-phosphoshikimate + ADP + H(+). It participates in metabolic intermediate biosynthesis; chorismate biosynthesis; chorismate from D-erythrose 4-phosphate and phosphoenolpyruvate: step 5/7. The polypeptide is Shikimate kinase (Methanococcus maripaludis (strain C5 / ATCC BAA-1333)).